We begin with the raw amino-acid sequence, 256 residues long: uncharacterized protein (256 aa).

The first 23 residues, 1 to 23, serve as a signal peptide directing secretion; that stretch reads MKRLNKLVLGIIFLFLVISITAG. Cysteine 24 carries the N-palmitoyl cysteine lipid modification. Cysteine 24 carries S-diacylglycerol cysteine lipidation.

The protein belongs to the staphylococcal tandem lipoprotein family.

Its subcellular location is the cell membrane. This is an uncharacterized protein from Staphylococcus aureus (strain COL).